Here is a 339-residue protein sequence, read N- to C-terminus: Thymidine kinase (339 aa).

ATP is bound at residue 11–18 (GAFGIGKT). Glu-39 acts as the Proton acceptor in catalysis. Positions 59 and 83 each coordinate substrate. ATP is bound at residue Arg-176. Position 182 (Arg-182) interacts with substrate.

Belongs to the herpesviridae thymidine kinase family. In terms of assembly, homodimer.

The catalysed reaction is thymidine + ATP = dTMP + ADP + H(+). In terms of biological role, catalyzes the transfer of the gamma-phospho group of ATP to thymidine to generate dTMP in the salvage pathway of pyrimidine synthesis. The dTMP serves as a substrate for DNA polymerase during viral DNA replication. Allows the virus to be reactivated and to grow in non-proliferative cells lacking a high concentration of phosphorylated nucleic acid precursors. The sequence is that of Thymidine kinase from Amazona oratrix (yellow-headed parrot).